We begin with the raw amino-acid sequence, 134 residues long: Small ribosomal subunit protein uS11 (134 aa).

This sequence belongs to the universal ribosomal protein uS11 family. In terms of assembly, part of the 30S ribosomal subunit. Interacts with proteins S7 and S18. Binds to IF-3.

In terms of biological role, located on the platform of the 30S subunit, it bridges several disparate RNA helices of the 16S rRNA. Forms part of the Shine-Dalgarno cleft in the 70S ribosome. The sequence is that of Small ribosomal subunit protein uS11 from Herminiimonas arsenicoxydans.